A 53-amino-acid chain; its full sequence is Large ribosomal subunit protein eL40 (53 aa).

This sequence belongs to the eukaryotic ribosomal protein eL40 family.

This is Large ribosomal subunit protein eL40 from Pyrobaculum islandicum (strain DSM 4184 / JCM 9189 / GEO3).